Here is a 440-residue protein sequence, read N- to C-terminus: Chromosomal replication initiator protein DnaA (440 aa).

Residues 1–69 (MKERILQEIK…VKVVLGNDAT (69 aa)) form a domain I, interacts with DnaA modulators region. The interval 69–96 (TFEITYEAFEPHSSYSEPLVKKRAVLLT) is domain II. The interval 97–313 (PLNPDYTFEN…GAIIKLLVYK (217 aa)) is domain III, AAA+ region. G140, G142, K143, and T144 together coordinate ATP. Residues 314–440 (ETTGKEVDLR…GEISKRALSG (127 aa)) form a domain IV, binds dsDNA region.

Belongs to the DnaA family. As to quaternary structure, oligomerizes as a right-handed, spiral filament on DNA at oriC.

Its subcellular location is the cytoplasm. Its function is as follows. Plays an essential role in the initiation and regulation of chromosomal replication. ATP-DnaA binds to the origin of replication (oriC) to initiate formation of the DNA replication initiation complex once per cell cycle. Binds the DnaA box (a 9 base pair repeat at the origin) and separates the double-stranded (ds)DNA. Forms a right-handed helical filament on oriC DNA; dsDNA binds to the exterior of the filament while single-stranded (ss)DNA is stabiized in the filament's interior. The ATP-DnaA-oriC complex binds and stabilizes one strand of the AT-rich DNA unwinding element (DUE), permitting loading of DNA polymerase. After initiation quickly degrades to an ADP-DnaA complex that is not apt for DNA replication. Binds acidic phospholipids. The sequence is that of Chromosomal replication initiator protein DnaA from Thermotoga petrophila (strain ATCC BAA-488 / DSM 13995 / JCM 10881 / RKU-1).